We begin with the raw amino-acid sequence, 266 residues long: Tryptophan synthase alpha chain (266 aa).

Catalysis depends on proton acceptor residues glutamate 52 and aspartate 63.

The protein belongs to the TrpA family. Tetramer of two alpha and two beta chains.

The enzyme catalyses (1S,2R)-1-C-(indol-3-yl)glycerol 3-phosphate + L-serine = D-glyceraldehyde 3-phosphate + L-tryptophan + H2O. It participates in amino-acid biosynthesis; L-tryptophan biosynthesis; L-tryptophan from chorismate: step 5/5. In terms of biological role, the alpha subunit is responsible for the aldol cleavage of indoleglycerol phosphate to indole and glyceraldehyde 3-phosphate. The protein is Tryptophan synthase alpha chain of Nocardia farcinica (strain IFM 10152).